Consider the following 205-residue polypeptide: Protein Nef (205 aa).

G2 carries the N-myristoyl glycine; by host lipid modification. Residue S6 is modified to Phosphoserine; by host. The interval 62 to 65 (EEGD) is acidic; interacts with host PACS1 and PACS2; stabilizes the interaction of NEF/MHC-I with host AP1M1; necessary for MHC-I internalization. An SH3-binding; interaction with Src family tyrosine kinases region spans residues 69 to 78 (PVRPQVPLRP). The PxxP; stabilizes the interaction of NEF/MHC-I with host AP1M1; necessary for MHC-I internalization signature appears at 72 to 75 (PQVP). The segment at 108–124 (EILDLWVYHTQGFFPDW) is mediates dimerization, Nef-PTE1 interaction. The tract at residues 148 to 180 (VDPAEVEEATGGENNSLLHPICQHGVDDEEKEV) is binding to ATP6V1H. Residues 164 to 165 (LL) carry the Dileucine internalization motif; necessary for CD4 internalization motif. The Diacidic; necessary for CD4 internalization signature appears at 174–175 (DD).

Belongs to the lentivirus primate group Nef protein family. In terms of assembly, monomer; cytosolic form. Homodimer; membrane bound form. Interacts with Nef associated p21-activated kinase (PAK2); this interaction activates PAK2. Associates with the Nef-MHC-I-AP1 complex; this complex is required for MHC-I internalization. Interacts (via C-terminus) with host PI3-kinase. Interacts with host PACS1; this interaction seems to be weak. Interacts with host PACS2. Interacts with host LCK and MAPK3; these interactions inhibit the kinase activity of the latter. Interacts with host ATP6V1H; this interaction may play a role in CD4 endocytosis. Associates with the CD4-Nef-AP2 complex; this complex is required for CD4 internalization. Interacts with host AP2 subunit alpha and AP2 subunit sigma2. Interacts with TCR-zeta chain; this interaction up-regulates the Fas ligand (FasL) surface expression. Interacts with host HCK, LYN, and SRC; these interactions activate the Src family kinases. Interacts with MAP3K5; this interaction inhibits the Fas and TNFR-mediated death signals. Interacts with beta-COP and PTE1. Interacts with human RACK1; this increases Nef phosphorylation by PKC. Interacts with TP53; this interaction decreases the half-life of TP53, protecting the infected cell against p53-mediated apoptosis. Post-translationally, the virion-associated Nef proteins are cleaved by the viral protease to release the soluble C-terminal core protein. Nef is probably cleaved concomitantly with viral structural proteins on maturation of virus particles. In terms of processing, myristoylated. Phosphorylated on serine residues, probably by host PKCdelta and theta.

The protein localises to the host cell membrane. It is found in the virion. The protein resides in the secreted. It localises to the host Golgi apparatus membrane. In terms of biological role, factor of infectivity and pathogenicity, required for optimal virus replication. Alters numerous pathways of T-lymphocyte function and down-regulates immunity surface molecules in order to evade host defense and increase viral infectivity. Alters the functionality of other immunity cells, like dendritic cells, monocytes/macrophages and NK cells. Functionally, in infected CD4(+) T-lymphocytes, down-regulates the surface MHC-I, mature MHC-II, CD4, CD28, CCR5 and CXCR4 molecules. Mediates internalization and degradation of host CD4 through the interaction of with the cytoplasmic tail of CD4, the recruitment of AP-2 (clathrin adapter protein complex 2), internalization through clathrin coated pits, and subsequent transport to endosomes and lysosomes for degradation. Diverts host MHC-I molecules to the trans-Golgi network-associated endosomal compartments by an endocytic pathway to finally target them for degradation. MHC-I down-regulation may involve AP-1 (clathrin adapter protein complex 1) or possibly Src family kinase-ZAP70/Syk-PI3K cascade recruited by PACS2. In consequence infected cells are masked for immune recognition by cytotoxic T-lymphocytes. Decreasing the number of immune receptors also prevents reinfection by more HIV particles (superinfection). Down-regulates host SERINC3 and SERINC5 thereby excluding these proteins from the viral particles. Virion infectivity is drastically higher when SERINC3 or SERINC5 are excluded from the viral envelope, because these host antiviral proteins impair the membrane fusion event necessary for subsequent virion penetration. Bypasses host T-cell signaling by inducing a transcriptional program nearly identical to that of anti-CD3 cell activation. Interaction with TCR-zeta chain up-regulates the Fas ligand (FasL). Increasing surface FasL molecules and decreasing surface MHC-I molecules on infected CD4(+) cells send attacking cytotoxic CD8+ T-lymphocytes into apoptosis. Its function is as follows. Plays a role in optimizing the host cell environment for viral replication without causing cell death by apoptosis. Protects the infected cells from apoptosis in order to keep them alive until the next virus generation is ready to strike. Inhibits the Fas and TNFR-mediated death signals by blocking MAP3K5/ASK1. Decreases the half-life of TP53, protecting the infected cell against p53-mediated apoptosis. Inhibits the apoptotic signals regulated by the Bcl-2 family proteins through the formation of a Nef/PI3-kinase/PAK2 complex that leads to activation of PAK2 and induces phosphorylation of host BAD. In terms of biological role, extracellular Nef protein targets CD4(+) T-lymphocytes for apoptosis by interacting with CXCR4 surface receptors. The sequence is that of Protein Nef from Human immunodeficiency virus type 1 group M subtype A (isolate U455) (HIV-1).